Here is a 409-residue protein sequence, read N- to C-terminus: MYENLLPRFLRYVKTETRSDATSTTTPSTQTQVAFAQTLKKELEELGMSDVIYNETNGFVIATLPSNVEKDVRSIGFIAHMDTADFNAVNVSPQIVENYDGESTIPLDKEGKFTLNTKDFPNLKNYRGETLITTDGTTLLGADDKSGIAEIMTAMEYLINHPEIKHGTIRVAFGPDEEIGVGADKFDVAQFNVDFAYTMDGGPVGELQFETFNAAQAEITIQGKNVHPGTAKNTMINALQLGIDFHNALPADEVPEKTAGEEGFYHLAAFAGTPEEATMTYIIRDHNREIFEARKAKIKEIQQTLNAPFDEERIKVDLFDQYYNMREVIEKDMSIVEIAKQAMEELSIQPIIEPVRGGTDGSKISYLGIPTPNIFAGGENMHGRFEFVSLQAMEKATNVIIKIAELNAK.

H80 serves as a coordination point for Zn(2+). Residue D82 is part of the active site. D143 serves as a coordination point for Zn(2+). Residue E177 is the Proton acceptor of the active site. Positions 178, 200, and 382 each coordinate Zn(2+).

The protein belongs to the peptidase M20B family. It depends on Zn(2+) as a cofactor.

Its subcellular location is the cytoplasm. It carries out the reaction Release of the N-terminal residue from a tripeptide.. Its function is as follows. Cleaves the N-terminal amino acid of tripeptides. The chain is Peptidase T from Enterococcus faecalis (strain ATCC 700802 / V583).